Here is a 470-residue protein sequence, read N- to C-terminus: Glutamate--tRNA ligase 1 (470 aa).

The 'HIGH' region motif lies at 8–18 (PSPTGYLHVGG). The 'KMSKS' region signature appears at 250–254 (KLSKR). Residue Lys-253 participates in ATP binding.

The protein belongs to the class-I aminoacyl-tRNA synthetase family. Glutamate--tRNA ligase type 1 subfamily. Monomer.

It is found in the cytoplasm. The catalysed reaction is tRNA(Glu) + L-glutamate + ATP = L-glutamyl-tRNA(Glu) + AMP + diphosphate. Functionally, catalyzes the attachment of glutamate to tRNA(Glu) in a two-step reaction: glutamate is first activated by ATP to form Glu-AMP and then transferred to the acceptor end of tRNA(Glu). This chain is Glutamate--tRNA ligase 1, found in Pseudothermotoga lettingae (strain ATCC BAA-301 / DSM 14385 / NBRC 107922 / TMO) (Thermotoga lettingae).